The sequence spans 199 residues: 3-isopropylmalate dehydratase small subunit (199 aa).

Belongs to the LeuD family. LeuD type 1 subfamily. As to quaternary structure, heterodimer of LeuC and LeuD.

It carries out the reaction (2R,3S)-3-isopropylmalate = (2S)-2-isopropylmalate. The protein operates within amino-acid biosynthesis; L-leucine biosynthesis; L-leucine from 3-methyl-2-oxobutanoate: step 2/4. Its function is as follows. Catalyzes the isomerization between 2-isopropylmalate and 3-isopropylmalate, via the formation of 2-isopropylmaleate. The sequence is that of 3-isopropylmalate dehydratase small subunit from Bacillus licheniformis (strain ATCC 14580 / DSM 13 / JCM 2505 / CCUG 7422 / NBRC 12200 / NCIMB 9375 / NCTC 10341 / NRRL NRS-1264 / Gibson 46).